A 200-amino-acid polypeptide reads, in one-letter code: ATP-dependent Clp protease proteolytic subunit 3 (200 aa).

Residue S101 is the Nucleophile of the active site. H126 is a catalytic residue.

The protein belongs to the peptidase S14 family. As to quaternary structure, fourteen ClpP subunits assemble into 2 heptameric rings which stack back to back to give a disk-like structure with a central cavity, resembling the structure of eukaryotic proteasomes.

It localises to the cytoplasm. The catalysed reaction is Hydrolysis of proteins to small peptides in the presence of ATP and magnesium. alpha-casein is the usual test substrate. In the absence of ATP, only oligopeptides shorter than five residues are hydrolyzed (such as succinyl-Leu-Tyr-|-NHMec, and Leu-Tyr-Leu-|-Tyr-Trp, in which cleavage of the -Tyr-|-Leu- and -Tyr-|-Trp bonds also occurs).. Its function is as follows. Cleaves peptides in various proteins in a process that requires ATP hydrolysis. Has a chymotrypsin-like activity. Plays a major role in the degradation of misfolded proteins. The polypeptide is ATP-dependent Clp protease proteolytic subunit 3 (Synechococcus sp. (strain CC9605)).